Reading from the N-terminus, the 345-residue chain is Membrane progestin receptor alpha (345 aa).

The Cytoplasmic portion of the chain corresponds to 1–74; the sequence is MAMAVAQKFN…FQRHNEAVNV (74 aa). A helical transmembrane segment spans residues 75–95; the sequence is WTHLLAALALLLRLIGLAASV. Topologically, residues 96-102 are extracellular; sequence DFREDPH. The helical transmembrane segment at 103-123 threads the bilayer; it reads ALPLFFIVLASFTYLSFSAVA. The Cytoplasmic portion of the chain corresponds to 124 to 136; the sequence is HLLQAKSEFWHYS. The chain crosses the membrane as a helical span at residues 137–157; sequence FFFLDYVGVAVYQFGSALAHF. Residues 158–168 lie on the Extracellular side of the membrane; the sequence is YYAIEPSWHDK. The helical transmembrane segment at 169–189 threads the bilayer; that stretch reads VQAIFLPTAAFLAWLSCAGSC. Over 190 to 243 the chain is Cytoplasmic; the sequence is YNKYSQKPGLLGRIFQEAPSALAYVLDISPVLHRIIVSPLPAEEDPALLYHKCQ. A helical transmembrane segment spans residues 244 to 264; sequence VVFFLLAAAFFSTVMPESWFP. Residues 265–268 lie on the Extracellular side of the membrane; that stretch reads GSCH. A helical transmembrane segment spans residues 269 to 289; it reads IFGQGHQVFHVFLVLCTLAQL. Over 290–315 the chain is Cytoplasmic; it reads EAVTLDYQARRGIYEPLHARWPHNFS. The helical transmembrane segment at 316–336 threads the bilayer; that stretch reads GLFLLTVASSSLTALLLSQLV. Residues 337 to 345 lie on the Extracellular side of the membrane; sequence RRKLHQKTK.

This sequence belongs to the ADIPOR family. As to expression, detected in most adult tissues. Higher expression found in white fat and liver than brown fat and skeletal muscle.

It localises to the cell membrane. Plasma membrane progesterone (P4) receptor coupled to G proteins. Seems to act through a G(i) mediated pathway. May be involved in oocyte maturation. Involved in neurosteroid inhibition of apoptosis. Also binds dehydroepiandrosterone (DHEA), pregnanolone, pregnenolone and allopregnanolone. The chain is Membrane progestin receptor alpha from Mus musculus (Mouse).